Consider the following 707-residue polypeptide: Keratin, type II cytoskeletal 2 epidermal (707 aa).

Positions 1-20 (MSCQISCRSRRGGGGGGGGG) are disordered. A head region spans residues 1–198 (MSCQISCRSR…DPEIQNVKSQ (198 aa)). An Asymmetric dimethylarginine modification is found at Arg-22. Phosphoserine occurs at positions 25 and 28. Residues 29 to 38 (AVVSGGSRRS) show a composition bias toward low complexity. A disordered region spans residues 29 to 59 (AVVSGGSRRSNTSFSCISRHGGGRGGSGGGG). Residue Arg-52 is modified to Omega-N-methylarginine. Phosphoserine is present on Ser-64. The interval 199 to 234 (EREQIKTLNNKFASFIDKVRFLEQQNQVLRTKWELL) is coil 1A. An IF rod domain is found at 199 to 512 (EREQIKTLNN…KLLEGEECRM (314 aa)). Residues 235–253 (QQLDVGSRTTNLDPIFQAY) form a linker 1 region. The coil 1B stretch occupies residues 254–345 (IGMLKKQVDR…TLYDAELSQL (92 aa)). Residues 346–369 (QQDVTDTNVILSMDNNRNLDLDSI) are linker 12. Residues 370–508 (IAEVQNQYEM…ATYRKLLEGE (139 aa)) are coil 2. Residues 509-707 (ECRMSGDFSD…CGSGVTFSFR (199 aa)) form a tail region. The interval 531-707 (SSVASKTGFG…CGSGVTFSFR (177 aa)) is disordered. The span at 539–700 (FGSGGQSSGG…GSGSGEGCGS (162 aa)) shows a compositional bias: gly residues. 4 positions are modified to omega-N-methylarginine: Arg-555, Arg-593, Arg-607, and Arg-675.

The protein belongs to the intermediate filament family. As to quaternary structure, heterotetramer of two type I and two type II keratins. Associates with KRT10. As to expression, expressed predominantly in the suprabasal layers of the plantar epidermis outside of the footpads (at protein level). Expressed in the suprabasal layers of the interfollicular epidermis of the ear, in the interscale regions distant from the hair follicles in the tail, and in the soles of the footpads (at protein level). Expressed mainly in the middle spinous and granular cells of the epidermis of adult tail, nipple and footsole skin. Also found in ear.

Its subcellular location is the cytoplasm. In terms of biological role, probably contributes to terminal cornification. Associated with keratinocyte activation, proliferation and keratinization. Required for maintenance of corneocytes and keratin filaments in suprabasal keratinocytes in the epidermis of the ear, potentially via moderation of expression and localization of keratins and their partner proteins. Plays a role in the establishment of the epidermal barrier on plantar skin. This is Keratin, type II cytoskeletal 2 epidermal from Mus musculus (Mouse).